The primary structure comprises 88 residues: Small ribosomal subunit protein bS18B (88 aa).

It belongs to the bacterial ribosomal protein bS18 family. In terms of assembly, part of the 30S ribosomal subunit. Forms a tight heterodimer with protein bS6.

Binds as a heterodimer with protein bS6 to the central domain of the 16S rRNA, where it helps stabilize the platform of the 30S subunit. In Mycobacterium bovis (strain ATCC BAA-935 / AF2122/97), this protein is Small ribosomal subunit protein bS18B (rpsR2).